Consider the following 348-residue polypeptide: Protein RecA (348 aa).

65 to 72 (GPESSGKT) serves as a coordination point for ATP.

It belongs to the RecA family.

Its subcellular location is the cytoplasm. Its function is as follows. Can catalyze the hydrolysis of ATP in the presence of single-stranded DNA, the ATP-dependent uptake of single-stranded DNA by duplex DNA, and the ATP-dependent hybridization of homologous single-stranded DNAs. It interacts with LexA causing its activation and leading to its autocatalytic cleavage. This chain is Protein RecA, found in Saccharophagus degradans (strain 2-40 / ATCC 43961 / DSM 17024).